The sequence spans 323 residues: COP9 signalosome complex subunit 6 (323 aa).

In terms of domain architecture, MPN spans 37-170 (VALHPLVILN…VSVFESVIDI (134 aa)).

This sequence belongs to the peptidase M67A family. CSN6 subfamily. Component of the CSN complex, composed of COPS1/GPS1, COPS2, COPS3, COPS4, COPS5, COPS6, COPS7 (COPS7A or COPS7B), COPS8 and COPS9. In the complex, it probably interacts directly with COPS2, COPS4, COPS5, COPS7 (COPS7A or COPS7B) and COPS9. Interacts with the translation initiation factor EIF3S6. Interacts weakly with RBX1. Directly interacts with COP1 and 14-3-3 protein sigma/SFN. Interacts with ERCC6.

Its subcellular location is the cytoplasm. It localises to the nucleus. In terms of biological role, component of the COP9 signalosome complex (CSN), a complex involved in various cellular and developmental processes. The CSN complex is an essential regulator of the ubiquitin (Ubl) conjugation pathway by mediating the deneddylation of the cullin subunits of SCF-type E3 ligase complexes, leading to decrease the Ubl ligase activity of SCF-type complexes such as SCF, CSA or DDB2. The complex is also involved in phosphorylation of p53/TP53, c-jun/JUN, IkappaBalpha/NFKBIA, ITPK1 and IRF8, possibly via its association with CK2 and PKD kinases. CSN-dependent phosphorylation of TP53 and JUN promotes and protects degradation by the Ubl system, respectively. Has some glucocorticoid receptor-responsive activity. Stabilizes COP1 through reducing COP1 auto-ubiquitination and decelerating COP1 turnover rate, hence regulates the ubiquitination of COP1 targets, including SFN. This chain is COP9 signalosome complex subunit 6 (COPS6), found in Sus scrofa (Pig).